An 899-amino-acid polypeptide reads, in one-letter code: Probable dipeptidyl-aminopeptidase B (899 aa).

Positions methionine 1–tyrosine 69 are disordered. Residues methionine 1 to leucine 99 are Cytoplasmic-facing. Positions aspartate 32–leucine 43 are enriched in low complexity. Residues isoleucine 100–phenylalanine 120 form a helical; Signal-anchor for type II membrane protein membrane-spanning segment. At valine 121–histidine 899 the chain is on the vacuolar side. Residues threonine 128 to proline 139 show a composition bias toward polar residues. The disordered stretch occupies residues threonine 128–proline 149. N-linked (GlcNAc...) asparagine glycans are attached at residues asparagine 212, asparagine 308, and asparagine 360. Residue serine 765 is the Charge relay system of the active site. Asparagine 819, asparagine 824, and asparagine 827 each carry an N-linked (GlcNAc...) asparagine glycan. Active-site charge relay system residues include aspartate 842 and histidine 875. Asparagine 893 carries N-linked (GlcNAc...) asparagine glycosylation.

It belongs to the peptidase S9B family.

The protein localises to the vacuole membrane. It carries out the reaction Release of an N-terminal dipeptide, Xaa-Yaa-|-Zaa-, from a polypeptide, preferentially when Yaa is Pro, provided Zaa is neither Pro nor hydroxyproline.. Its function is as follows. Type IV dipeptidyl-peptidase which removes N-terminal dipeptides sequentially from polypeptides having unsubstituted N-termini provided that the penultimate residue is proline. In Trichophyton verrucosum (strain HKI 0517), this protein is Probable dipeptidyl-aminopeptidase B (DAPB).